We begin with the raw amino-acid sequence, 376 residues long: Protein FhaE (376 aa).

The signal sequence occupies residues 1–37; sequence MSQIFADRRAAVPARVISFCGAALAVWAGLAVQPAMA.

The protein is Protein FhaE (fhaE) of Bordetella pertussis (strain Tohama I / ATCC BAA-589 / NCTC 13251).